The primary structure comprises 55 residues: Large ribosomal subunit protein bL33 (55 aa).

It belongs to the bacterial ribosomal protein bL33 family.

This chain is Large ribosomal subunit protein bL33, found in Dehalococcoides mccartyi (strain ATCC BAA-2100 / JCM 16839 / KCTC 5957 / BAV1).